The sequence spans 136 residues: Large ribosomal subunit protein uL16 (136 aa).

It belongs to the universal ribosomal protein uL16 family. In terms of assembly, part of the 50S ribosomal subunit.

Its function is as follows. Binds 23S rRNA and is also seen to make contacts with the A and possibly P site tRNAs. The chain is Large ribosomal subunit protein uL16 from Ehrlichia canis (strain Jake).